A 158-amino-acid polypeptide reads, in one-letter code: MAYFSTATSLLLLVLSVSSPYVHGASDCDTLVITLFPCLPFISIGGTADTPTASCCSSLKNILDTKPICLCEGLKKAPLGIKLNVTKSATLPVACKLNAPPVSACDSLPPASPPTANGQAPVWGSGWAPAPSPSKGNSLIPISGFSFVIVTALAMFRI.

A signal peptide spans 1–24 (MAYFSTATSLLLLVLSVSSPYVHG). Cystine bridges form between C28–C71, C38–C55, C56–C95, and C69–C105. A glycan (N-linked (GlcNAc...) asparagine) is linked at N84. S134 carries GPI-anchor amidated serine lipidation. The propeptide at 135–158 (KGNSLIPISGFSFVIVTALAMFRI) is removed in mature form.

The protein belongs to the plant LTP family. As to expression, confined to the ovaries of the inflorescence.

It is found in the secreted. It localises to the cell membrane. Its function is as follows. Probable lipid transfer protein. In Arabidopsis thaliana (Mouse-ear cress), this protein is Non-specific lipid transfer protein GPI-anchored 29.